We begin with the raw amino-acid sequence, 388 residues long: Succinate--CoA ligase [ADP-forming] subunit beta (388 aa).

The ATP-grasp domain maps to 9–244 (KQLFAEFGLP…PSQEDEREAH (236 aa)). Residues lysine 46, 53–55 (GRG), glutamate 99, serine 102, and glutamate 107 contribute to the ATP site. Residues asparagine 199 and aspartate 213 each contribute to the Mg(2+) site. Residues asparagine 264 and 321–323 (GIV) each bind substrate.

Belongs to the succinate/malate CoA ligase beta subunit family. As to quaternary structure, heterotetramer of two alpha and two beta subunits. Requires Mg(2+) as cofactor.

The catalysed reaction is succinate + ATP + CoA = succinyl-CoA + ADP + phosphate. It carries out the reaction GTP + succinate + CoA = succinyl-CoA + GDP + phosphate. It participates in carbohydrate metabolism; tricarboxylic acid cycle; succinate from succinyl-CoA (ligase route): step 1/1. Its function is as follows. Succinyl-CoA synthetase functions in the citric acid cycle (TCA), coupling the hydrolysis of succinyl-CoA to the synthesis of either ATP or GTP and thus represents the only step of substrate-level phosphorylation in the TCA. The beta subunit provides nucleotide specificity of the enzyme and binds the substrate succinate, while the binding sites for coenzyme A and phosphate are found in the alpha subunit. This chain is Succinate--CoA ligase [ADP-forming] subunit beta, found in Vibrio atlanticus (strain LGP32) (Vibrio splendidus (strain Mel32)).